A 382-amino-acid chain; its full sequence is Cell division protein FtsZ (382 aa).

GTP contacts are provided by residues 21-25 (GGGSN), 108-110 (GTG), Glu139, Arg143, and Asp187. A disordered region spans residues 322–382 (RAQQQSNFNR…FLRNRRRKSR (61 aa)). Residues 340 to 352 (KSKEKEAEKKEPR) are compositionally biased toward basic and acidic residues.

Belongs to the FtsZ family. Homodimer. Polymerizes to form a dynamic ring structure in a strictly GTP-dependent manner. Interacts directly with several other division proteins.

The protein resides in the cytoplasm. In terms of biological role, essential cell division protein that forms a contractile ring structure (Z ring) at the future cell division site. The regulation of the ring assembly controls the timing and the location of cell division. One of the functions of the FtsZ ring is to recruit other cell division proteins to the septum to produce a new cell wall between the dividing cells. Binds GTP and shows GTPase activity. This chain is Cell division protein FtsZ, found in Halalkalibacterium halodurans (strain ATCC BAA-125 / DSM 18197 / FERM 7344 / JCM 9153 / C-125) (Bacillus halodurans).